The following is a 473-amino-acid chain: MSIKPVVALIGRPNVGKSTLFNQFTKSRQALVADLSGLTRDRQYGDATYEDKAFIVVDTGGIGEADDGRGDIDDYMSEQSYTAIHEADIIVFVVDARAGMIGADAEIGKFLHTLGKPVYVVANKVDGVHDSAPAEFYALGLGEPYPMAASHGRGVGNLLEVLTADMPNQENIIEPRGLKLAIIGRPNVGKSTLVNRLLGEDRVVVFDMPGTTRDSIYIPYKRDGKDYVLIDTAGVRRRGKIDEKVEKFSVIKTLQAIEDSNVTVIVIDAHEGIVDQDLHMIGYALDAGRALVVAINKWDGLTADQKNYIKIEMDRRFNFIPYVKVHQISALHGTGVGNLYPSILRAYQSSMFEVSTNRLTQILQDAVTANPPPTVAGRRIKLRYAHIGGHNPPVIVIHGNQTGSLPKSYQRYLENQFRQVFKLEGTPLNVVFKLNENPYANKSDTPTKAKTQQLRQRERNRAQKFTTKDKKPR.

2 EngA-type G domains span residues 5 to 170 (PVVA…PNQE) and 178 to 351 (LKLA…QSSM). GTP is bound by residues 11–18 (GRPNVGKS), 58–62 (DTGGI), 123–126 (NKVD), 184–191 (GRPNVGKS), 231–235 (DTAGV), and 296–299 (NKWD). In terms of domain architecture, KH-like spans 352-436 (FEVSTNRLTQ…PLNVVFKLNE (85 aa)). Over residues 438–454 (PYANKSDTPTKAKTQQL) the composition is skewed to polar residues. Residues 438–473 (PYANKSDTPTKAKTQQLRQRERNRAQKFTTKDKKPR) are disordered. The span at 455–473 (RQRERNRAQKFTTKDKKPR) shows a compositional bias: basic and acidic residues.

It belongs to the TRAFAC class TrmE-Era-EngA-EngB-Septin-like GTPase superfamily. EngA (Der) GTPase family. In terms of assembly, associates with the 50S ribosomal subunit.

GTPase that plays an essential role in the late steps of ribosome biogenesis. This Psychrobacter arcticus (strain DSM 17307 / VKM B-2377 / 273-4) protein is GTPase Der.